Here is a 99-residue protein sequence, read N- to C-terminus: Aspartyl/glutamyl-tRNA(Asn/Gln) amidotransferase subunit C (99 aa).

Belongs to the GatC family. Heterotrimer of A, B and C subunits.

It carries out the reaction L-glutamyl-tRNA(Gln) + L-glutamine + ATP + H2O = L-glutaminyl-tRNA(Gln) + L-glutamate + ADP + phosphate + H(+). It catalyses the reaction L-aspartyl-tRNA(Asn) + L-glutamine + ATP + H2O = L-asparaginyl-tRNA(Asn) + L-glutamate + ADP + phosphate + 2 H(+). Functionally, allows the formation of correctly charged Asn-tRNA(Asn) or Gln-tRNA(Gln) through the transamidation of misacylated Asp-tRNA(Asn) or Glu-tRNA(Gln) in organisms which lack either or both of asparaginyl-tRNA or glutaminyl-tRNA synthetases. The reaction takes place in the presence of glutamine and ATP through an activated phospho-Asp-tRNA(Asn) or phospho-Glu-tRNA(Gln). This is Aspartyl/glutamyl-tRNA(Asn/Gln) amidotransferase subunit C from Orientia tsutsugamushi (strain Ikeda) (Rickettsia tsutsugamushi).